The chain runs to 77 residues: Omega-conotoxin-like 6 (77 aa).

An N-terminal signal peptide occupies residues 1 to 22; that stretch reads MKLTCVVIIAVLLLTACQLITA. Residues 23–50 constitute a propeptide that is removed on maturation; that stretch reads DDSRGVQKHRSLRSTTKVSKSTSCMEAG. 3 disulfides stabilise this stretch: C46–C61, C53–C64, and C60–C71.

This sequence belongs to the conotoxin O1 superfamily. Expressed by the venom duct.

The protein localises to the secreted. Functionally, omega-conotoxins act at presynaptic membranes, they bind and block voltage-gated calcium channels (Cav). The polypeptide is Omega-conotoxin-like 6 (Conus striatus (Striated cone)).